Reading from the N-terminus, the 112-residue chain is Ribonuclease P protein component (112 aa).

Belongs to the RnpA family. In terms of assembly, consists of a catalytic RNA component (M1 or rnpB) and a protein subunit.

The catalysed reaction is Endonucleolytic cleavage of RNA, removing 5'-extranucleotides from tRNA precursor.. Functionally, RNaseP catalyzes the removal of the 5'-leader sequence from pre-tRNA to produce the mature 5'-terminus. It can also cleave other RNA substrates such as 4.5S RNA. The protein component plays an auxiliary but essential role in vivo by binding to the 5'-leader sequence and broadening the substrate specificity of the ribozyme. In Mycoplasma mobile (strain ATCC 43663 / 163K / NCTC 11711) (Mesomycoplasma mobile), this protein is Ribonuclease P protein component.